Consider the following 240-residue polypeptide: MYLRRAVSKTLALPLRAPPGPAPLRKDASLRWISSNKFPGSSGSNMIYYLVVGVTVSAGGYYTYKRVTSGKAKRSDHVTDLKEKTKAELQPPQGEKENLVGAEEASLEAPEVSSTEASPVVTEDIPDAPAVVGKEAPPCPDDAEAAPSETVVVGAEPKPEMTDAATVETTEVSTETTSEVTSTGPEEAAAVDSAEGTTENESPGECAELEENSPVESESSAGEDLQEEACAGSEAASAQG.

Topologically, residues 1–45 (MYLRRAVSKTLALPLRAPPGPAPLRKDASLRWISSNKFPGSSGSN) are cytoplasmic. The helical; Anchor for type IV membrane protein transmembrane segment at 46–64 (MIYYLVVGVTVSAGGYYTY) threads the bilayer. Over 65-240 (KRVTSGKAKR…AGSEAASAQG (176 aa)) the chain is Mitochondrial intermembrane. The disordered stretch occupies residues 72-240 (AKRSDHVTDL…AGSEAASAQG (169 aa)). Over residues 73 to 87 (KRSDHVTDLKEKTKA) the composition is skewed to basic and acidic residues. Low complexity-rich tracts occupy residues 166–183 (TVET…VTST) and 228–240 (EACA…SAQG).

Interacts with RHOT1/Miro-1, RHOT2/Miro-2, TRAK1/OIP106 and TRAK2/GRIF1.

The protein resides in the mitochondrion. It localises to the mitochondrion outer membrane. The protein localises to the mitochondrion inner membrane. In terms of biological role, plays a role in the trafficking of mitochondria along microtubules. Regulates the kinesin-mediated axonal transport of mitochondria to nerve terminals along microtubules during hypoxia. Participates in the translocation of TRAK2/GRIF1 from the cytoplasm to the mitochondrion. Also plays a role in steroidogenesis through maintenance of mitochondrial abundance and morphology. Plays an inhibitory role during neocortex development by regulating mitochondrial morphology, distribution and motility in neocortical neurons. The chain is Protein MGARP (MGARP) from Bos taurus (Bovine).